A 326-amino-acid chain; its full sequence is Protein SEH1 (326 aa).

WD repeat units lie at residues 7-46, 54-95, 105-146, 224-266, and 278-317; these read TLDSGTTCSSWNQSGDRLAAGSLNGKLSIYESSTSSSSTF, VSES…AHGL, NKSS…ELKN, DKGD…DLEG, and GHQGEVWQMEWDMSGMTLASTGSDGMVKLWQSNLNGEWHE.

The protein belongs to the WD repeat SEC13 family. As to quaternary structure, part of the nuclear pore complex (NPC). The NPC has an eight-fold symmetrical structure comprising a central transport channel and two rings, the cytoplasmic and nuclear rings, to which eight filaments are attached. The cytoplasmic filaments have loose ends, while the nuclear filaments are joined in a distal ring, forming a nuclear basket. NPCs are highly dynamic in configuration and composition, and can be devided in 3 subcomplexes, the NUP62 subcomplex, the NUP107-160 subcomplex and the NUP93 subcomplex, containing approximately 30 different nucleoporin proteins.

The protein localises to the nucleus envelope. The protein resides in the nucleus. It is found in the cytoplasm. It localises to the nuclear pore complex. Functionally, required for proper export of mRNAs from the nucleus to the cytoplasm. In Arabidopsis thaliana (Mouse-ear cress), this protein is Protein SEH1.